Reading from the N-terminus, the 125-residue chain is MARIASVNIPDNKRLVVSLTYIYGLGSTMAAEICNKAKISKDKKVKVLTDQELISLRNIIENEYKVEGDLKREVTLNIKKKKDIRCYQGLRHIRKLPVRGQNTHSNARTRKGKAIAIAGKKKTVK.

The protein belongs to the universal ribosomal protein uS13 family. In terms of assembly, part of the 30S ribosomal subunit. Forms a loose heterodimer with protein S19. Forms two bridges to the 50S subunit in the 70S ribosome.

In terms of biological role, located at the top of the head of the 30S subunit, it contacts several helices of the 16S rRNA. In the 70S ribosome it contacts the 23S rRNA (bridge B1a) and protein L5 of the 50S subunit (bridge B1b), connecting the 2 subunits; these bridges are implicated in subunit movement. Contacts the tRNAs in the A and P-sites. The chain is Small ribosomal subunit protein uS13 from Rickettsia prowazekii (strain Madrid E).